Here is a 455-residue protein sequence, read N- to C-terminus: MIPARDTIAAVATAPGRGGVGIVRVSGPRARAIAITLSGREPTPRHAHYGPFHADDGEVIDEGLLLFFPGPHSFTGEDVLELHGHGGPVVLDMLLQRCVDLGVRLARPGEFSERAFLNDKLDLAQAEAIADLIEASSAQAARNAVRSLQGEFSRRVHQLTERLIQLRIYVEAAIDFPEEEIDFLADGHVLAQLDGVRTELSTVLREAGQGALLRDGMTVVIAGRPNAGKSSLLNALAGREAAIVTDIAGTTRDVLREHILIDGMPLHVVDTAGLRDTEDQVERIGVQRALSAIGEADRILLVVDASAPEASDPSALWPEFLDFSPEPGKVTLIRNKADLTGEAIVLRCDNDGQATLSLCARSGEGLELLREHLKHCMGYEQTAESSFSARRRHLDALRLADEHLRHGHDQLTLAGAGELLAEDLRLAQQALGEITGAFSSDDLLGRIFSSFCIGK.

(6S)-5-formyl-5,6,7,8-tetrahydrofolate contacts are provided by arginine 24, glutamate 81, and lysine 120. The region spanning 216 to 378 (GMTVVIAGRP…LREHLKHCMG (163 aa)) is the TrmE-type G domain. Asparagine 226 lines the K(+) pocket. GTP is bound by residues 226-231 (NAGKSS), 245-251 (TDIAGTT), 270-273 (DTAG), and 335-338 (NKAD). Serine 230 provides a ligand contact to Mg(2+). Residues threonine 245, isoleucine 247, and threonine 250 each coordinate K(+). Threonine 251 contacts Mg(2+). Lysine 455 is a binding site for (6S)-5-formyl-5,6,7,8-tetrahydrofolate.

The protein belongs to the TRAFAC class TrmE-Era-EngA-EngB-Septin-like GTPase superfamily. TrmE GTPase family. As to quaternary structure, homodimer. Heterotetramer of two MnmE and two MnmG subunits. K(+) is required as a cofactor.

The protein localises to the cytoplasm. Functionally, exhibits a very high intrinsic GTPase hydrolysis rate. Involved in the addition of a carboxymethylaminomethyl (cmnm) group at the wobble position (U34) of certain tRNAs, forming tRNA-cmnm(5)s(2)U34. This chain is tRNA modification GTPase MnmE, found in Stutzerimonas stutzeri (strain A1501) (Pseudomonas stutzeri).